Reading from the N-terminus, the 517-residue chain is Crotonobetaine/carnitine--CoA ligase (517 aa).

The protein belongs to the ATP-dependent AMP-binding enzyme family.

The catalysed reaction is 4-(trimethylamino)butanoate + ATP + CoA = 4-(trimethylamino)butanoyl-CoA + AMP + diphosphate. It catalyses the reaction crotonobetaine + ATP + CoA = crotonobetainyl-CoA + AMP + diphosphate. It carries out the reaction (R)-carnitine + ATP + CoA = (R)-carnitinyl-CoA + AMP + diphosphate. It participates in amine and polyamine metabolism; carnitine metabolism. Catalyzes the transfer of CoA to carnitine, generating the initial carnitinyl-CoA needed for the CaiB reaction cycle. Also has activity toward crotonobetaine and gamma-butyrobetaine. This chain is Crotonobetaine/carnitine--CoA ligase, found in Salmonella arizonae (strain ATCC BAA-731 / CDC346-86 / RSK2980).